The chain runs to 682 residues: Histone deacetylase 18 (682 aa).

The histone deacetylase stretch occupies residues 59–382 (KVGLVYDETM…SLACVQVLLE (324 aa)). Histidine 191 serves as the catalytic Proton donor/acceptor. 3 residues coordinate Zn(2+): aspartate 231, histidine 233, and aspartate 324. Positions 430 to 608 (SAERNSADAL…DKELQEDRSR (179 aa)) form a coiled coil.

The protein belongs to the histone deacetylase family. HD type 2 subfamily. It depends on Zn(2+) as a cofactor. As to expression, expressed in roots, stems, young rosette leaves, flowers and siliques.

It localises to the nucleus. Its subcellular location is the cytoplasm. It carries out the reaction N(6)-acetyl-L-lysyl-[histone] + H2O = L-lysyl-[histone] + acetate. In terms of biological role, responsible for the deacetylation of lysine residues on the N-terminal part of the core histones (H2A, H2B, H3 and H4). Histone deacetylation gives a tag for epigenetic repression and plays an important role in transcriptional regulation, cell cycle progression and developmental events. Histone deacetylases act via the formation of large multiprotein complexes. Required for appropriate cellular patterning in the root epidermis. Involved in the differentiation of hair and non-hair cells in the root epidermis. Is not directly involved in the regulation of the expression of pattern genes. Regulates the transcription of certain kinase genes, which are components of a positional information relay system, by changing their histone acetylation status. In Arabidopsis thaliana (Mouse-ear cress), this protein is Histone deacetylase 18.